The following is a 169-amino-acid chain: Peptide methionine sulfoxide reductase MsrA (169 aa).

Cys-10 is an active-site residue.

It belongs to the MsrA Met sulfoxide reductase family.

The catalysed reaction is L-methionyl-[protein] + [thioredoxin]-disulfide + H2O = L-methionyl-(S)-S-oxide-[protein] + [thioredoxin]-dithiol. The enzyme catalyses [thioredoxin]-disulfide + L-methionine + H2O = L-methionine (S)-S-oxide + [thioredoxin]-dithiol. In terms of biological role, has an important function as a repair enzyme for proteins that have been inactivated by oxidation. Catalyzes the reversible oxidation-reduction of methionine sulfoxide in proteins to methionine. The protein is Peptide methionine sulfoxide reductase MsrA of Streptococcus pyogenes serotype M12 (strain MGAS2096).